The sequence spans 387 residues: SLC2A4 regulator (387 aa).

Disordered regions lie at residues 1–97 (MERP…RATP) and 139–179 (EALV…PPEA). Positions 27–36 (GPGPRAAPVT) are enriched in low complexity. The C2H2-type zinc finger occupies 200-225 (FQCLWKSCGKVLSTASAMQRHIRLVH). The Nuclear export signal signature appears at 253–263 (LTDGLSSLTPV). Phosphoserine occurs at positions 264 and 268. The disordered stretch occupies residues 283–305 (EPPALPSPLRPPAPPLPPPPVLS). Positions 285 to 303 (PALPSPLRPPAPPLPPPPV) are enriched in pro residues. Residues 351 to 354 (RKPR) carry the Nuclear localization signal motif.

In terms of assembly, interacts with MEF2A. In terms of tissue distribution, according to PubMed:14630949, expressed in heart, skeletal muscle, liver, kidney and pancreas; undetectable in lung, placenta or brain. According to PubMed:14625278, ubiquitously expressed, with lowest expression in brain and ileum.

It localises to the cytoplasm. The protein localises to the nucleus. In terms of biological role, transcription factor involved in SLC2A4 and HD gene transactivation. Binds to the consensus sequence 5'-GCCGGCG-3'. This is SLC2A4 regulator (SLC2A4RG) from Homo sapiens (Human).